The chain runs to 541 residues: Tyrosine-protein phosphatase non-receptor type 5 (541 aa).

The disordered stretch occupies residues 1 to 55 (MCCSERLLGLPQPVEMEAPDEAEGLPSKQKEMPPPPPPSPPSEPAQKLPPQGAGS). Residues 32-43 (MPPPPPPSPPSE) show a composition bias toward pro residues. The next 2 helical transmembrane spans lie at 64-84 (LCLF…LSGH) and 122-142 (LLLV…WHLL). Ser221 carries the phosphoserine; by PKA modification. Thr231 is subject to Phosphothreonine; by MAPK. Ser244 carries the post-translational modification Phosphoserine; by MAPK. A Tyrosine-protein phosphatase domain is found at 276 to 531 (LQAEFFEIPM…QFVHHAMSLY (256 aa)). Residues Asp437, 472-478 (CSAGIGR), and Gln516 contribute to the substrate site. Cys472 acts as the Phosphocysteine intermediate in catalysis.

It belongs to the protein-tyrosine phosphatase family. Non-receptor class subfamily. In terms of processing, phosphorylation at Ser-221 by PKA deactivates PTPN5. Phosphorylation at Thr-231 and Ser-244 by MAPKs stabilizes the phosphatase, dephosphorylation of these sites results in ubiquitin-mediated degradation of the active phosphatase. As to expression, STEP20 is expressed only in the CNS.

The protein localises to the endoplasmic reticulum membrane. Its subcellular location is the cytoplasm. It carries out the reaction O-phospho-L-tyrosyl-[protein] + H2O = L-tyrosyl-[protein] + phosphate. Functionally, may regulate the activity of several effector molecules involved in synaptic plasticity and neuronal cell survival, including MAPKs, Src family kinases and NMDA receptors. The polypeptide is Tyrosine-protein phosphatase non-receptor type 5 (Ptpn5) (Mus musculus (Mouse)).